The chain runs to 760 residues: Phosphatidylinositol N-acetylglucosaminyltransferase subunit Q (760 aa).

The next 5 membrane-spanning stretches (helical) occupy residues 278 to 298 (TVASVLLDVALGLMLLSWLHG), 349 to 371 (LYHIHLWISYIHLMSPFVEHILW), 378 to 400 (CLGLTVALSLLSDIIALLTFHIY), 446 to 468 (LFIGTLLFTILLFLLPTTALYYL), and 475 to 497 (LLVVAVQGLIHLLVDLINSLPLY). The interval 696-748 (LAVGVEGPCQDEPPSPRHPLAPSAEQHPASGGLKQSLTPVPSGPGPSLPEPHG) is disordered.

It belongs to the PIGQ family. As to quaternary structure, component of the glycosylphosphatidylinositol-N-acetylglucosaminyltransferase (GPI-GnT) complex composed at least by PIGA, PIGC, PIGH, PIGP, PIGQ, PIGY and DPM2. Interacts with PIGA, PIGH and PIGC.

It localises to the membrane. Its pathway is glycolipid biosynthesis; glycosylphosphatidylinositol-anchor biosynthesis. Functionally, part of the glycosylphosphatidylinositol-N-acetylglucosaminyltransferase (GPI-GnT) complex that catalyzes the transfer of N-acetylglucosamine from UDP-N-acetylglucosamine to phosphatidylinositol and participates in the first step of GPI biosynthesis. The polypeptide is Phosphatidylinositol N-acetylglucosaminyltransferase subunit Q (Homo sapiens (Human)).